Reading from the N-terminus, the 926-residue chain is UvrABC system protein A (926 aa).

Residue 31–38 (GPSGSGKS) participates in ATP binding. A C4-type zinc finger spans residues 251–278 (CPEHGFSIPELSARLFSFNSPYGACPSC). ABC transporter domains follow at residues 308-568 (SGYF…PSSL) and 588-916 (PSGK…KYLR). An ATP-binding site is contributed by 620-627 (GVSGSGKS). The C4-type zinc-finger motif lies at 719 to 745 (CEACQGEGVIKVEMHFLPPVYVTCEVC).

This sequence belongs to the ABC transporter superfamily. UvrA family. Forms a heterotetramer with UvrB during the search for lesions.

It is found in the cytoplasm. In terms of biological role, the UvrABC repair system catalyzes the recognition and processing of DNA lesions. UvrA is an ATPase and a DNA-binding protein. A damage recognition complex composed of 2 UvrA and 2 UvrB subunits scans DNA for abnormalities. When the presence of a lesion has been verified by UvrB, the UvrA molecules dissociate. The chain is UvrABC system protein A from Aquifex aeolicus (strain VF5).